The primary structure comprises 251 residues: Ubiquinone/menaquinone biosynthesis C-methyltransferase UbiE (251 aa).

S-adenosyl-L-methionine is bound by residues T74, D95, 123 to 124 (NA), and S140.

Belongs to the class I-like SAM-binding methyltransferase superfamily. MenG/UbiE family.

The enzyme catalyses a 2-demethylmenaquinol + S-adenosyl-L-methionine = a menaquinol + S-adenosyl-L-homocysteine + H(+). The catalysed reaction is a 2-methoxy-6-(all-trans-polyprenyl)benzene-1,4-diol + S-adenosyl-L-methionine = a 5-methoxy-2-methyl-3-(all-trans-polyprenyl)benzene-1,4-diol + S-adenosyl-L-homocysteine + H(+). It participates in quinol/quinone metabolism; menaquinone biosynthesis; menaquinol from 1,4-dihydroxy-2-naphthoate: step 2/2. The protein operates within cofactor biosynthesis; ubiquinone biosynthesis. Functionally, methyltransferase required for the conversion of demethylmenaquinol (DMKH2) to menaquinol (MKH2) and the conversion of 2-polyprenyl-6-methoxy-1,4-benzoquinol (DDMQH2) to 2-polyprenyl-3-methyl-6-methoxy-1,4-benzoquinol (DMQH2). This chain is Ubiquinone/menaquinone biosynthesis C-methyltransferase UbiE, found in Escherichia coli O1:K1 / APEC.